We begin with the raw amino-acid sequence, 469 residues long: ATP-dependent protease ATPase subunit HslU (469 aa).

Residues I24, 66 to 71 (GVGKTE), D282, E347, and R419 contribute to the ATP site.

This sequence belongs to the ClpX chaperone family. HslU subfamily. As to quaternary structure, a double ring-shaped homohexamer of HslV is capped on each side by a ring-shaped HslU homohexamer. The assembly of the HslU/HslV complex is dependent on binding of ATP.

It is found in the cytoplasm. In terms of biological role, ATPase subunit of a proteasome-like degradation complex; this subunit has chaperone activity. The binding of ATP and its subsequent hydrolysis by HslU are essential for unfolding of protein substrates subsequently hydrolyzed by HslV. HslU recognizes the N-terminal part of its protein substrates and unfolds these before they are guided to HslV for hydrolysis. The sequence is that of ATP-dependent protease ATPase subunit HslU from Listeria welshimeri serovar 6b (strain ATCC 35897 / DSM 20650 / CCUG 15529 / CIP 8149 / NCTC 11857 / SLCC 5334 / V8).